The chain runs to 365 residues: Mitogen-activated protein kinase HOG1 (365 aa).

The Protein kinase domain occupies 20–306; sequence YSDLQPVGMG…ATNALAHEYL (287 aa). ATP is bound by residues 26–34 and K49; that span reads VGMGAFGLV. D148 serves as the catalytic Proton acceptor. Positions 178 to 180 match the TXY motif; sequence TGY.

This sequence belongs to the protein kinase superfamily. Ser/Thr protein kinase family. MAP kinase subfamily. HOG1 sub-subfamily. Requires Mg(2+) as cofactor.

The protein resides in the cytoplasm. It localises to the nucleus. The catalysed reaction is L-seryl-[protein] + ATP = O-phospho-L-seryl-[protein] + ADP + H(+). It catalyses the reaction L-threonyl-[protein] + ATP = O-phospho-L-threonyl-[protein] + ADP + H(+). In terms of biological role, proline-directed serine/threonine-protein kinase involved in a signal transduction pathway that is activated by changes in the osmolarity of the extracellular environment. Controls osmotic regulation of transcription of target genes. Involved in environmental stress response, hyphal growth, conidiation and possibly secondary metabolism such as ustiloxin biosynthesis or the biosynthesis of other phytotoxic compounds that are inhibitory to rice shoot growth during seed germination. Plays a key role in responses to cell wall and membrane stresses but not oxidative stress. This Ustilaginoidea virens (Rice false smut fungus) protein is Mitogen-activated protein kinase HOG1.